A 135-amino-acid polypeptide reads, in one-letter code: Small ribosomal subunit protein uS8 (135 aa).

It belongs to the universal ribosomal protein uS8 family. As to quaternary structure, part of the 30S ribosomal subunit. Contacts proteins S5 and S12.

One of the primary rRNA binding proteins, it binds directly to 16S rRNA central domain where it helps coordinate assembly of the platform of the 30S subunit. The polypeptide is Small ribosomal subunit protein uS8 (Parafrankia sp. (strain EAN1pec)).